The primary structure comprises 135 residues: Ribonuclease VapC26 (135 aa).

In terms of domain architecture, PINc spans 1–118 (MIIDTSALLA…TRTILTLDRR (118 aa)). Residues Asp4 and Asp97 each contribute to the Mg(2+) site.

This sequence belongs to the PINc/VapC protein family. It depends on Mg(2+) as a cofactor.

Functionally, toxic component of a type II toxin-antitoxin (TA) system. An RNase. Upon expression in M.smegmatis inhibits colony formation. Its toxic effect is neutralized by coexpression with cognate antitoxin VapB26. The sequence is that of Ribonuclease VapC26 from Mycobacterium tuberculosis (strain ATCC 25618 / H37Rv).